The sequence spans 545 residues: Coiled-coil domain-containing protein 60 (545 aa).

Residues 72 to 99 (NILREENAMKKKQQLLQKLKEEELNKFQ) are a coiled coil. The segment at 224 to 284 (PAIRTAMASR…DNESSSTKPE (61 aa)) is disordered. Low complexity predominate over residues 238–259 (RGSTLSLTRTSGGSSPQSSMMS).

The protein is Coiled-coil domain-containing protein 60 (Ccdc60) of Mus musculus (Mouse).